The following is a 458-amino-acid chain: Transcription factor ORF10 (458 aa).

Residues 38–65 (CESCRLKKLRCSGHKSGCDRCRSQAMKC) constitute a DNA-binding region (zn(2)-C6 fungal-type). Positions 69 to 109 (IGAPSNSSRPKSRSHFQPNFSNMSGTAGTSKAPSPLGNDGV) are disordered. Positions 71-100 (APSNSSRPKSRSHFQPNFSNMSGTAGTSKA) are enriched in polar residues.

The protein resides in the nucleus. Transcription factor that specifically regulates the expression of the gene cluster that mediates the biosynthesis of PR-toxin, a bicyclic sesquiterpene belonging to the eremophilane class and acting as a mycotoxin. This Penicillium roqueforti (strain FM164) protein is Transcription factor ORF10.